Consider the following 150-residue polypeptide: Large ribosomal subunit protein bL9 (150 aa).

It belongs to the bacterial ribosomal protein bL9 family.

Functionally, binds to the 23S rRNA. The chain is Large ribosomal subunit protein bL9 from Paraburkholderia phytofirmans (strain DSM 17436 / LMG 22146 / PsJN) (Burkholderia phytofirmans).